The primary structure comprises 150 residues: SsrA-binding protein (150 aa).

The disordered stretch occupies residues 130 to 150 (DKRESLKEKDDRREMDRMFKR).

The protein belongs to the SmpB family.

It is found in the cytoplasm. Required for rescue of stalled ribosomes mediated by trans-translation. Binds to transfer-messenger RNA (tmRNA), required for stable association of tmRNA with ribosomes. tmRNA and SmpB together mimic tRNA shape, replacing the anticodon stem-loop with SmpB. tmRNA is encoded by the ssrA gene; the 2 termini fold to resemble tRNA(Ala) and it encodes a 'tag peptide', a short internal open reading frame. During trans-translation Ala-aminoacylated tmRNA acts like a tRNA, entering the A-site of stalled ribosomes, displacing the stalled mRNA. The ribosome then switches to translate the ORF on the tmRNA; the nascent peptide is terminated with the 'tag peptide' encoded by the tmRNA and targeted for degradation. The ribosome is freed to recommence translation, which seems to be the essential function of trans-translation. In Phocaeicola vulgatus (strain ATCC 8482 / DSM 1447 / JCM 5826 / CCUG 4940 / NBRC 14291 / NCTC 11154) (Bacteroides vulgatus), this protein is SsrA-binding protein.